The following is a 2392-amino-acid chain: Protein Ycf2 (2392 aa).

1658-1665 (GPTEIGKS) is an ATP binding site.

It belongs to the Ycf2 family.

It is found in the plastid. Its subcellular location is the chloroplast stroma. In terms of biological role, probable ATPase of unknown function. Its presence in a non-photosynthetic plant (Epifagus virginiana) and experiments in tobacco indicate that it has an essential function which is probably not related to photosynthesis. The polypeptide is Protein Ycf2 (Anthoceros angustus (Hornwort)).